The chain runs to 182 residues: MKYFEKRFLDVYRPIYLGVIFLGIVLDLVTKFLVILYFQPHRYLEVFGSFFRMTLTFNTGFVFGAFQDNAIPSLIATGVAIVFLIGYRWKNHDLGNPWGWNLVMAGAFGNFLDKFFVKIPGTGFRFGFQPNMGEYIGVVDFLDFDWPDFLLFSRWPAFNVADSCVTIGLTILIFTMKLEEEK.

Transmembrane regions (helical) follow at residues 15–35 (IYLGVIFLGIVLDLVTKFLVI), 44–64 (LEVFGSFFRMTLTFNTGFVFG), 65–85 (AFQDNAIPSLIATGVAIVFLI), and 97–117 (PWGWNLVMAGAFGNFLDKFFV). Active-site residues include Asp140 and Asp162. A helical transmembrane segment spans residues 155-175 (WPAFNVADSCVTIGLTILIFT).

It belongs to the peptidase A8 family.

It localises to the cell inner membrane. The catalysed reaction is Release of signal peptides from bacterial membrane prolipoproteins. Hydrolyzes -Xaa-Yaa-Zaa-|-(S,diacylglyceryl)Cys-, in which Xaa is hydrophobic (preferably Leu), and Yaa (Ala or Ser) and Zaa (Gly or Ala) have small, neutral side chains.. Its pathway is protein modification; lipoprotein biosynthesis (signal peptide cleavage). Its function is as follows. This protein specifically catalyzes the removal of signal peptides from prolipoproteins. The sequence is that of Lipoprotein signal peptidase from Leptospira interrogans serogroup Icterohaemorrhagiae serovar Lai (strain 56601).